The chain runs to 320 residues: Heterogeneous nuclear ribonucleoprotein A1 (320 aa).

Position 1 is an N-acetylmethionine (M1). S2 is subject to N-acetylserine; in Heterogeneous nuclear ribonucleoprotein A1, N-terminally processed. Residue S2 is modified to Phosphoserine. Residue K3 is modified to N6-acetyllysine; alternate. A Glycyl lysine isopeptide (Lys-Gly) (interchain with G-Cter in SUMO2); alternate cross-link involves residue K3. Residues S4 and S6 each carry the phosphoserine modification. Residues 4–94 are globular A domain; it reads SESPKEPEQL…EPKRAVSRED (91 aa). Residue K8 forms a Glycyl lysine isopeptide (Lys-Gly) (interchain with G-Cter in SUMO2) linkage. RRM domains follow at residues 14 to 97 and 105 to 184; these read RKLF…DSQR and KKIF…LCKQ. At S22 the chain carries Phosphoserine. Residue K78 forms a Glycyl lysine isopeptide (Lys-Gly) (interchain with G-Cter in SUMO2) linkage. The interval 95–185 is globular B domain; the sequence is SQRPGAHLTV…EVRKALCKQE (91 aa). Residue K113 forms a Glycyl lysine isopeptide (Lys-Gly) (interchain with G-Cter in SUMO) linkage. Residues K179 and K183 each participate in a glycyl lysine isopeptide (Lys-Gly) (interchain with G-Cter in SUMO2) cross-link. The interval 188-216 is disordered; sequence SASSSQRGRSGSGNFGGGRGGGFGGNDNF. S192 is modified (phosphoserine; by MKNK2). R194 is subject to Asymmetric dimethylarginine; alternate. At R194 the chain carries Dimethylated arginine; alternate. R194 bears the Omega-N-methylarginine; alternate mark. The span at 197-216 shows a compositional bias: gly residues; sequence SGSGNFGGGRGGGFGGNDNF. S199 is subject to Phosphoserine. 4 positions are modified to asymmetric dimethylarginine; alternate: R206, R218, R225, and R232. A Dimethylated arginine; alternate modification is found at R206. R206, R218, R225, and R232 each carry omega-N-methylarginine; alternate. Residues 218–240 are RNA-binding RGG-box; that stretch reads RGGNFSGRGGFGGSRGGGGYGGS. R225 is modified (dimethylated arginine; alternate). A nuclear targeting sequence region spans residues 268 to 305; sequence NQSSNFGPMKGGNFGGRSSGPYGGGGQYFAKPRNQGGY. The tract at residues 271-320 is disordered; it reads SNFGPMKGGNFGGRSSGPYGGGGQYFAKPRNQGGYGGSSSSSSYGSGRRF. The segment covering 276–294 has biased composition (gly residues); sequence MKGGNFGGRSSGPYGGGGQ. At R284 the chain carries Omega-N-methylarginine. At S285 the chain carries Phosphoserine. An N6-acetyllysine; alternate modification is found at K298. A Glycyl lysine isopeptide (Lys-Gly) (interchain with G-Cter in SUMO2); alternate cross-link involves residue K298. At R300 the chain carries Omega-N-methylarginine. Residues 308–320 are compositionally biased toward low complexity; that stretch reads SSSSSSYGSGRRF. A Phosphoserine modification is found at S309. S310, S311, and S312 each carry phosphoserine; by MKNK2. A phosphoserine mark is found at S313 and S316. Omega-N-methylarginine is present on R318.

Identified in the spliceosome C complex. Identified in a IGF2BP1-dependent mRNP granule complex containing untranslated mRNAs. Interacts with SEPT6. Interacts with C9orf72. Interacts with KHDRBS1. Interacts with UBQLN2. Interacts with PPIA/CYPA. Post-translationally, sumoylated.

The protein resides in the nucleus. The protein localises to the cytoplasm. Its function is as follows. Involved in the packaging of pre-mRNA into hnRNP particles, transport of poly(A) mRNA from the nucleus to the cytoplasm and modulation of splice site selection. Plays a role in the splicing of pyruvate kinase PKM by binding repressively to sequences flanking PKM exon 9, inhibiting exon 9 inclusion and resulting in exon 10 inclusion and production of the PKM M2 isoform. Binds to the IRES and thereby inhibits the translation of the apoptosis protease activating factor APAF1. May bind to specific miRNA hairpins. The polypeptide is Heterogeneous nuclear ribonucleoprotein A1 (Hnrnpa1) (Rattus norvegicus (Rat)).